The sequence spans 223 residues: All-trans retinoic acid-induced differentiation factor (223 aa).

The signal sequence occupies residues 1 to 25 (MASRESGGSRAAALLLVLGVERALA). Over 26 to 193 (LPEICTLCPG…YKCMRQGSFS (168 aa)) the chain is Extracellular. Positions 146–187 (QRDLCNSTGSPEMCPENGSCASDGPGLLQCVCADGFHGYKCM) constitute an EGF-like domain. Disulfide bonds link Cys-150-Cys-165, Cys-159-Cys-175, and Cys-177-Cys-186. The helical transmembrane segment at 194 to 214 (LLMFFGILGSTTLAISILLWG) threads the bilayer. Over 215 to 223 (TQRRKAKAS) the chain is Cytoplasmic.

Interacts with NELL1; the interaction promotes osteoblastic differentiation and mineralization. Interacts with SLC37A3; the interaction is direct and both proteins are mutually dependent for their stability.

It localises to the nucleus envelope. Its subcellular location is the cell membrane. The protein localises to the lysosome membrane. Functionally, promotes osteoblast cell differentiation and terminal mineralization. Plays a role in inducing the cell cycle arrest via inhibiting CCND1 expression in all-trans-retinoic acid (ATRA) signal pathway. In osteoclasts, forms a transporter complex with ATRAID for nitrogen-containing-bisphophonates (N-BPs) required for releasing N-BP molecules that have trafficked to lysosomes through fluid-phase endocytosis into the cytosol. The chain is All-trans retinoic acid-induced differentiation factor (Atraid) from Mus musculus (Mouse).